A 368-amino-acid chain; its full sequence is UDP-N-acetylglucosamine--N-acetylmuramyl-(pentapeptide) pyrophosphoryl-undecaprenol N-acetylglucosamine transferase (368 aa).

UDP-N-acetyl-alpha-D-glucosamine is bound by residues 13 to 15 (TGG), N127, R168, S200, I254, and Q299.

This sequence belongs to the glycosyltransferase 28 family. MurG subfamily.

It is found in the cell inner membrane. The catalysed reaction is di-trans,octa-cis-undecaprenyl diphospho-N-acetyl-alpha-D-muramoyl-L-alanyl-D-glutamyl-meso-2,6-diaminopimeloyl-D-alanyl-D-alanine + UDP-N-acetyl-alpha-D-glucosamine = di-trans,octa-cis-undecaprenyl diphospho-[N-acetyl-alpha-D-glucosaminyl-(1-&gt;4)]-N-acetyl-alpha-D-muramoyl-L-alanyl-D-glutamyl-meso-2,6-diaminopimeloyl-D-alanyl-D-alanine + UDP + H(+). It functions in the pathway cell wall biogenesis; peptidoglycan biosynthesis. Its function is as follows. Cell wall formation. Catalyzes the transfer of a GlcNAc subunit on undecaprenyl-pyrophosphoryl-MurNAc-pentapeptide (lipid intermediate I) to form undecaprenyl-pyrophosphoryl-MurNAc-(pentapeptide)GlcNAc (lipid intermediate II). This Parabacteroides distasonis (strain ATCC 8503 / DSM 20701 / CIP 104284 / JCM 5825 / NCTC 11152) protein is UDP-N-acetylglucosamine--N-acetylmuramyl-(pentapeptide) pyrophosphoryl-undecaprenol N-acetylglucosamine transferase.